We begin with the raw amino-acid sequence, 257 residues long: Transmembrane protein C257L (257 aa).

2 helical membrane-spanning segments follow: residues 123-143 (LELLGYSPTPIIGGDFMFTAL) and 163-183 (MMIFFLIILLCVILGIFYVLV).

The protein belongs to the asfivirus C257R family.

Its subcellular location is the host membrane. It is found in the virion. This chain is Transmembrane protein C257L, found in African swine fever virus (isolate Tick/South Africa/Pretoriuskop Pr4/1996) (ASFV).